Reading from the N-terminus, the 218-residue chain is Small ribosomal subunit protein uS3c (218 aa).

The KH type-2 domain maps to 47–118; sequence VQKNMRISSG…RLNIAITRVA (72 aa).

It belongs to the universal ribosomal protein uS3 family. As to quaternary structure, part of the 30S ribosomal subunit.

It is found in the plastid. The protein resides in the chloroplast. The polypeptide is Small ribosomal subunit protein uS3c (rps3) (Calycanthus floridus var. glaucus (Eastern sweetshrub)).